The primary structure comprises 71 residues: Small ribosomal subunit protein bS21 (71 aa).

Positions 37–71 are disordered; that stretch reads HYEKPTAERKRKKAAAVKRHMKKLSRDNARRVKLY. Basic residues predominate over residues 45-59; that stretch reads RKRKKAAAVKRHMKK. A compositionally biased stretch (basic and acidic residues) spans 60–71; it reads LSRDNARRVKLY.

It belongs to the bacterial ribosomal protein bS21 family.

The sequence is that of Small ribosomal subunit protein bS21 from Pseudoalteromonas translucida (strain TAC 125).